A 251-amino-acid polypeptide reads, in one-letter code: Haloacid dehalogenase-like hydrolase domain-containing protein 3 (251 aa).

The residue at position 15 (K15) is an N6-acetyllysine; alternate. K15 carries the post-translational modification N6-succinyllysine; alternate. Position 130 is an N6-acetyllysine (K130).

Belongs to the HAD-like hydrolase superfamily.

In Bos taurus (Bovine), this protein is Haloacid dehalogenase-like hydrolase domain-containing protein 3 (HDHD3).